A 349-amino-acid chain; its full sequence is Cdc42 effector protein 4 (349 aa).

Residue Lys-5 is modified to N6-methyllysine. Ser-18 carries the post-translational modification Phosphoserine. The 15-residue stretch at 27 to 41 folds into the CRIB domain; that stretch reads ISAPLGDFRHTMHVG. A phosphoserine mark is found at Ser-64, Ser-103, Ser-107, and Ser-116. The segment covering 123–132 has biased composition (basic and acidic residues); sequence KEAAEKDSSK. 3 disordered regions span residues 123 to 172, 220 to 240, and 278 to 349; these read KEAA…LLDE, QWGSEEEEEAGGYRDKEGPSS, and GWAV…EIRV. 8 positions are modified to phosphoserine: Ser-136, Ser-138, Ser-140, Ser-154, Ser-165, Ser-223, Ser-285, and Ser-288. The segment covering 280–308 has biased composition (low complexity); it reads AVVAPSPSSARSVGSHTTRDSSSLSSYTS. The segment covering 311–322 has biased composition (basic and acidic residues); sequence LEERSPAFRGPD. A compositionally biased stretch (acidic residues) spans 338–349; that stretch reads FMDEEEEDEIRV.

Belongs to the BORG/CEP family. In terms of assembly, interacts with CDC42 and RHOQ, in a GTP-dependent manner. In terms of tissue distribution, ubiquitous.

The protein localises to the endomembrane system. Its subcellular location is the cytoplasm. It localises to the cytoskeleton. Its function is as follows. Probably involved in the organization of the actin cytoskeleton. May act downstream of CDC42 to induce actin filament assembly leading to cell shape changes. Induces pseudopodia formation, when overexpressed in fibroblasts. In Mus musculus (Mouse), this protein is Cdc42 effector protein 4 (Cdc42ep4).